A 360-amino-acid polypeptide reads, in one-letter code: Photosystem II protein D1 2 (360 aa).

3 consecutive transmembrane segments (helical) span residues 29–46 (YIGW…AATT), 118–133 (HFLT…EWEL), and 142–156 (WICL…AATA). Chlorophyll a is bound at residue His-118. Tyr-126 is a binding site for pheophytin a. Positions 170 and 189 each coordinate [CaMn4O5] cluster. A helical transmembrane segment spans residues 197–218 (FHMLGVAGVFGGSLFSAMHGSL). His-198 contributes to the chlorophyll a binding site. A quinone is bound by residues His-215 and 264–265 (SF). His-215 serves as a coordination point for Fe cation. Residue His-272 coordinates Fe cation. The chain crosses the membrane as a helical span at residues 274 to 288 (FLAAWPVIGIWFTAL). [CaMn4O5] cluster is bound by residues His-332, Glu-333, Asp-342, and Ala-344. The propeptide occupies 345–360 (AGEVAPVAISAPAING).

Belongs to the reaction center PufL/M/PsbA/D family. As to quaternary structure, PSII is composed of 1 copy each of membrane proteins PsbA, PsbB, PsbC, PsbD, PsbE, PsbF, PsbH, PsbI, PsbJ, PsbK, PsbL, PsbM, PsbT, PsbX, PsbY, PsbZ, Psb30/Ycf12, peripheral proteins PsbO, CyanoQ (PsbQ), PsbU, PsbV and a large number of cofactors. It forms dimeric complexes. The D1/D2 heterodimer binds P680, chlorophylls that are the primary electron donor of PSII, and subsequent electron acceptors. It shares a non-heme iron and each subunit binds pheophytin, quinone, additional chlorophylls, carotenoids and lipids. D1 provides most of the ligands for the Mn4-Ca-O5 cluster of the oxygen-evolving complex (OEC). There is also a Cl(-1) ion associated with D1 and D2, which is required for oxygen evolution. The PSII complex binds additional chlorophylls, carotenoids and specific lipids. is required as a cofactor. Post-translationally, tyr-161 forms a radical intermediate that is referred to as redox-active TyrZ, YZ or Y-Z. C-terminally processed by CtpA; processing is essential to allow assembly of the oxygen-evolving complex and thus photosynthetic growth.

The protein localises to the cellular thylakoid membrane. The enzyme catalyses 2 a plastoquinone + 4 hnu + 2 H2O = 2 a plastoquinol + O2. Its function is as follows. Photosystem II (PSII) is a light-driven water:plastoquinone oxidoreductase that uses light energy to abstract electrons from H(2)O, generating O(2) and a proton gradient subsequently used for ATP formation. It consists of a core antenna complex that captures photons, and an electron transfer chain that converts photonic excitation into a charge separation. The D1/D2 (PsbA/PsbD) reaction center heterodimer binds P680, the primary electron donor of PSII as well as several subsequent electron acceptors. In Nostoc sp. (strain PCC 7120 / SAG 25.82 / UTEX 2576), this protein is Photosystem II protein D1 2.